The sequence spans 432 residues: Lipoyl synthase, mitochondrial (432 aa).

Over residues 32-68 (TLGATPGSTSTSTSTSTATTTTLESTSTSTSGDATET) the composition is skewed to low complexity. The segment at 32–71 (TLGATPGSTSTSTSTSTATTTTLESTSTSTSGDATETTIK) is disordered. Cys-150, Cys-155, Cys-161, Cys-180, Cys-184, Cys-187, and Ser-395 together coordinate [4Fe-4S] cluster. The region spanning 165 to 384 (KKSEATATIM…RDVALEMGFL (220 aa)) is the Radical SAM core domain.

Belongs to the radical SAM superfamily. Lipoyl synthase family. The cofactor is [4Fe-4S] cluster.

Its subcellular location is the mitochondrion. The catalysed reaction is [[Fe-S] cluster scaffold protein carrying a second [4Fe-4S](2+) cluster] + N(6)-octanoyl-L-lysyl-[protein] + 2 oxidized [2Fe-2S]-[ferredoxin] + 2 S-adenosyl-L-methionine + 4 H(+) = [[Fe-S] cluster scaffold protein] + N(6)-[(R)-dihydrolipoyl]-L-lysyl-[protein] + 4 Fe(3+) + 2 hydrogen sulfide + 2 5'-deoxyadenosine + 2 L-methionine + 2 reduced [2Fe-2S]-[ferredoxin]. It participates in protein modification; protein lipoylation via endogenous pathway; protein N(6)-(lipoyl)lysine from octanoyl-[acyl-carrier-protein]: step 2/2. Functionally, catalyzes the radical-mediated insertion of two sulfur atoms into the C-6 and C-8 positions of the octanoyl moiety bound to the lipoyl domains of lipoate-dependent enzymes, thereby converting the octanoylated domains into lipoylated derivatives. The protein is Lipoyl synthase, mitochondrial of Lodderomyces elongisporus (strain ATCC 11503 / CBS 2605 / JCM 1781 / NBRC 1676 / NRRL YB-4239) (Yeast).